Reading from the N-terminus, the 153-residue chain is Protein ElaA (153 aa).

The N-acetyltransferase domain occupies 7–151 (LHHSELSVSQ…PHIGMAREVI (145 aa)).

This sequence belongs to the UPF0039 (ElaA) family.

This Escherichia coli (strain K12) protein is Protein ElaA (elaA).